The chain runs to 317 residues: Mitochondrial thiamine pyrophosphate carrier 1 (317 aa).

3 Solcar repeats span residues 12–110 (GTRR…TTQV), 120–206 (PPAL…LRPV), and 214–309 (PFGS…SLKL). Transmembrane regions (helical) follow at residues 17-35 (VVLS…VAPL), 91-107 (LMYV…YRTT), 126-146 (FVSG…LDLL), 181-198 (GCSA…LFFA), 220-240 (AAAG…LDLV), and 284-301 (GLTV…ITMW).

This sequence belongs to the mitochondrial carrier (TC 2.A.29) family.

It is found in the mitochondrion inner membrane. In terms of biological role, mitochondrial transporter that mediates uptake of thiamine pyrophosphate (ThPP) into mitochondria. This chain is Mitochondrial thiamine pyrophosphate carrier 1 (tpc1), found in Neosartorya fischeri (strain ATCC 1020 / DSM 3700 / CBS 544.65 / FGSC A1164 / JCM 1740 / NRRL 181 / WB 181) (Aspergillus fischerianus).